The sequence spans 514 residues: Maturase K (514 aa).

This sequence belongs to the intron maturase 2 family. MatK subfamily.

It localises to the plastid. It is found in the chloroplast. Its function is as follows. Usually encoded in the trnK tRNA gene intron. Probably assists in splicing its own and other chloroplast group II introns. The sequence is that of Maturase K from Encephalartos altensteinii (Altenstein's bread tree).